The sequence spans 828 residues: MSATAEVLVISSSPERNPVHTPAPPAYDPERLFGLSPVDVETTPLPSPSDLFCPPTHSRFFEVGNQVDELRRDETRKKSSTLTNDDSAVTTLEGEPATDKPKRRGRPKKEQKRATEELGPCVTGNEKTTTKKTITGTSKKRAQPATKRSKQANKTISGRVAKAGTPQVKEAGEKAICPSTPTTALPLKATNDVLEWERDGLQLEQAMTRRLDWTPTVNKVKEVVELEGKSGSDDNTRGFGNLLSEYGFNGAAAPVNDFMASVEGGPTKRRRIELVDPGVYPAPRQSVADDSEKDNTEGTRKSTPAARKKPTKRANKFTTLTARVTAKYINESTEGSDVVDEETPKAKPKVSRSKKKGQASKSYEPEFVVLSPEEAAKSLDDQELVFGTCSQLEREDSPTTIRELQAAISESERSMTLEASGRPHRTQSKGSSSTVSRFNGSGNLWSVASRDVDGSLMQVEVVDLVNSPDRSGTITLDERPSNAKRVAEAECNTSDINPTQKGSDQAKAASTSETQPVVPSTTQSKNKKAENTTSIARKPDPKMPQYDNFTDAQLSKQAASFGFKPLKNRKKMIELLEKCWKAKNSISSEANNENTDQETPAEPESAPEPGNKPKGKGTTRKTTTKAKAKTQPSTSSKSTTEAISTTKSPSNPNSNTTTSTSTSISKPTPSYANVEEIEDSEEDSDPISFPSPSRLLPQTLQTNHKHAHTLPTSNLPSSPNRTTSTSVPKEPEPPAILLPLTEQITKAVRAQSAAHPASSNSNKTHTRKQTWHEKILMYDPIPLEEFTTWLNTEGLGLVNEDREVGAGFVRRWCESKGVVCCYRPRKKE.

6 disordered regions span residues 1–183, 261–364, 409–439, 468–551, 586–734, and 749–768; these read MSAT…TPTT, SVEG…KSYE, SESE…SRFN, PDRS…NFTD, ISSE…PEPP, and RAQS…HTRK. Residues 68–77 are compositionally biased toward basic and acidic residues; sequence DELRRDETRK. Residues 80–90 show a composition bias toward polar residues; sequence STLTNDDSAVT. 4 stretches are compositionally biased toward basic residues: residues 101 to 111, 138 to 151, 306 to 315, and 346 to 358; these read PKRRGRPKKEQ, SKKR…RSKQ, ARKKPTKRAN, and AKPK…KKGQ. Residues 428 to 439 are compositionally biased toward polar residues; that stretch reads SKGSSSTVSRFN. Positions 476–488 are enriched in basic and acidic residues; sequence LDERPSNAKRVAE. The segment covering 491–524 has biased composition (polar residues); that stretch reads CNTSDINPTQKGSDQAKAASTSETQPVVPSTTQS. A compositionally biased stretch (basic residues) spans 613–628; that stretch reads PKGKGTTRKTTTKAKA. The segment covering 629 to 670 has biased composition (low complexity); the sequence is KTQPSTSSKSTTEAISTTKSPSNPNSNTTTSTSTSISKPTPS. The segment covering 675–685 has biased composition (acidic residues); sequence EEIEDSEEDSD. The segment covering 710–727 has biased composition (polar residues); that stretch reads LPTSNLPSSPNRTTSTSV.

This sequence belongs to the SLX4 family. As to quaternary structure, forms a heterodimer with slx1. In terms of processing, phosphorylated in response to DNA damage.

Its subcellular location is the nucleus. Functionally, regulatory subunit of the slx1-slx4 structure-specific endonuclease that resolves DNA secondary structures generated during DNA repair and recombination. Has endonuclease activity towards branched DNA substrates, introducing single-strand cuts in duplex DNA close to junctions with ss-DNA. The sequence is that of Structure-specific endonuclease subunit slx4 (slx4) from Aspergillus niger (strain ATCC MYA-4892 / CBS 513.88 / FGSC A1513).